Consider the following 100-residue polypeptide: Defensin-6 (100 aa).

Residues 1–19 form the signal peptide; sequence MRTLTILTAVLLVALQAKA. The propeptide occupies 20–68; that stretch reads EPLQAEDDPLQAKAYEADAQEQRGANDQDFAVSFAEDASSSLRALGSTR. Intrachain disulfides connect Cys72-Cys99, Cys74-Cys88, and Cys78-Cys98.

This sequence belongs to the alpha-defensin family. In terms of assembly, homodimer. Self-assembles into higher-order oligomers termed nanonets, fibril-like structures that entrap microbes. Self-assembly into nanonets seems to protect against proteolytic digestion in duodenal fluid. Interacts with Y.enterocolitica invasin and S.typhimurium fliC/flagellin; the interaction creates an anchoring site for progressive DEFA6 self-assembly into nanonets. Proteolytically cleaved by trypsin at Arg-68; the propeptide is stored in the tissue of the small intestine and the mature peptide is found in the luminal fluid; cleavage may occur during or after release into the lumen. The N-terminal propeptide region suppresses self-assembly and renders DEFA6 propeptide unable to agglutinate bacteria and protect human epithelial cells from bacterial invasion. Post-translationally, under reducing conditions, naturally present in the gut owing to the low redox potential or enzymatically generated by the thioredoxin system, the disulfide bridges are opened leading to a conformational change of DEF6, thereby changing its antimicrobial spectrum. The reduced form exhibits inhibitory activity against anaerobic bacteria, in contrast to the minimal antimicrobial activity of the disulfide-linked oxidized form. The formation of higher-order nanonets and bacterial entrapment is independent of the redox state. As to expression, expressed in Paneth cells of the small intestine (at protein level).

Its subcellular location is the secreted. The protein localises to the cytoplasmic vesicle. The protein resides in the secretory vesicle. Functionally, host-defense peptide that contributes to intestinal innate immunity and mediates homeostasis at mucosal surfaces by forming higher-order oligomers that capture bacteria and prevent microbial invasion of the epithelium. After binding to bacterial surface proteins, undergoes ordered self-assembly to form fibril-like nanonets that surround and entangle bacteria and thereby prevent bacterial invasion across the epithelial barrier. Entangles and agglutinates Gram-negative bacteria, such as E.coli, S.typhimurium and Y.enterocolitica, and Gram-positive bacteria such as L.monocytogenes, thereby protecting the intestine against invasion by enteric bacterial pathogens. Blocks adhesion of C.albicans to intestinal epithelial cells and thereby suppresses fungal invasion of epithelial cells and biofilm formation. Under reducing conditions and in an acidic environment similar to the intestinal milieu, exhibits inhibitory activity against anaerobic bacteria such as B.adolescentis, L.acidophilus and B.breve, as well as B.longum and S.thermophilus, possibly by leading to alterations in bacterial cell envelope structures. The disulfide-linked oxidized form exhibits negligible antimicrobial activity against Gram-negative and Gram-positive bacteria, as compared to the enteric defensin DEFA5. This chain is Defensin-6 (DEFA6), found in Homo sapiens (Human).